Reading from the N-terminus, the 421-residue chain is Serine protease HTRA2, mitochondrial (421 aa).

The chain crosses the membrane as a helical span at residues 63 to 81 (VIRFFVPFSLGALASTMVA). Residues 74-77 (ALAS) carry the IAP-binding motif. The interval 138 to 301 (SNGSGFVIEQ…IPIDYVKVFL (164 aa)) is serine protease. Residues H156, D188, and S265 each act as charge relay system in the active site. The PDZ domain maps to 324–409 (MGITMLTLTP…ELDIVILRGV (86 aa)).

This sequence belongs to the peptidase S1C family. As to quaternary structure, interacts with th/DIAP1 (via BIR 2 domain).

The protein localises to the mitochondrion intermembrane space. Its subcellular location is the mitochondrion membrane. The enzyme catalyses Cleavage of non-polar aliphatic amino-acids at the P1 position, with a preference for Val, Ile and Met. At the P2 and P3 positions, Arg is selected most strongly with a secondary preference for other hydrophilic residues.. In terms of biological role, serine protease that shows proteolytic activity against a non-specific substrate beta-casein. Promotes or induces cell death either by direct binding to and inhibition of BIRC proteins (also called inhibitor of apoptosis proteins, IAPs), leading to an increase in caspase activity, or by a BIRC inhibition-independent, caspase-independent and serine protease activity-dependent mechanism. Can antagonize antiapoptotic activity of th/Diap1 by directly inducing the degradation of th/Diap1. The chain is Serine protease HTRA2, mitochondrial from Drosophila virilis (Fruit fly).